The primary structure comprises 167 residues: Ribosome maturation factor RimM (167 aa).

A PRC barrel domain is found at 94–166 (QNRAWLHELE…YIVVPRFDEF (73 aa)).

The protein belongs to the RimM family. Binds ribosomal protein uS19.

The protein resides in the cytoplasm. Its function is as follows. An accessory protein needed during the final step in the assembly of 30S ribosomal subunit, possibly for assembly of the head region. Essential for efficient processing of 16S rRNA. May be needed both before and after RbfA during the maturation of 16S rRNA. It has affinity for free ribosomal 30S subunits but not for 70S ribosomes. The protein is Ribosome maturation factor RimM of Chlorobium phaeovibrioides (strain DSM 265 / 1930) (Prosthecochloris vibrioformis (strain DSM 265)).